The sequence spans 650 residues: Putative secretin GspD (650 aa).

The signal sequence occupies residues 1-23 (MKGLNKITCCLLAALLMPCAGHA). The tract at residues 24–122 (ENEQYGANFN…IADSSRPGVG (99 aa)) is N0. The N1 stretch occupies residues 124-188 (ELVTRIVPLE…EVIKRVDVIG (65 aa)). The tract at residues 189 to 263 (TEKQQIIHLE…LLKSLDVEES (75 aa)) is N2. The interval 266-342 (GNTRVYYLKY…KLATVIARLD (77 aa)) is N3. Residues 345-596 (RAQVLVEAII…VFIRPTIIRD (252 aa)) are secretin. The segment at 598 to 650 (DVYRSLSKEKYTRYRQEQQQRIDGKSKALVGSEDLPVLDENTFNSHAPAPSSR) is s domain.

Belongs to the bacterial secretin family. GSP D subfamily. In terms of assembly, forms a cylindrical channel with 15 subunits; approximately 25% of the particles have 16-subunit channels. Closed pentadeacameric channels are 180 Angstroms long and 145 Angstroms in diameter. Each subunit turns in a clock-wise manner around the channel.

It is found in the cell outer membrane. Functionally, involved in a type II secretion system (T2SS, formerly general secretion pathway, GSP) for the export of folded proteins across the outer membrane. This subunit would form the outer membrane channel. This Escherichia coli (strain K12) protein is Putative secretin GspD (gspD).